Reading from the N-terminus, the 258-residue chain is Ribosomal RNA small subunit methyltransferase J (258 aa).

Residues 123–124 (ER) and Asp-177 contribute to the S-adenosyl-L-methionine site. The tract at residues 232–258 (IDGPKPSHSLEGKSSRYDIYPKKALKA) is disordered. Basic and acidic residues predominate over residues 239–252 (HSLEGKSSRYDIYP).

The protein belongs to the methyltransferase superfamily. RsmJ family.

Its subcellular location is the cytoplasm. It carries out the reaction guanosine(1516) in 16S rRNA + S-adenosyl-L-methionine = N(2)-methylguanosine(1516) in 16S rRNA + S-adenosyl-L-homocysteine + H(+). Functionally, specifically methylates the guanosine in position 1516 of 16S rRNA. The protein is Ribosomal RNA small subunit methyltransferase J of Pseudomonas putida (strain W619).